Here is a 1514-residue protein sequence, read N- to C-terminus: Neuropathy target esterase sws (1514 aa).

The Lumenal portion of the chain corresponds to 1-34; it reads MDVLELLRASATGSYTALFSDAWCQYVSKQITNS. Residues 35–55 form a helical membrane-spanning segment; that stretch reads MYLYCALGVLSMVFLAWFMYF. At 56–1514 the chain is on the cytoplasmic side; sequence KRLARIRLRD…KGGAYNETKN (1459 aa). 175 to 302 contacts a nucleoside 3',5'-cyclic phosphate; that stretch reads IFGHFEKPVF…IRVIQVIMIR (128 aa). The span at 337-352 shows a compositional bias: polar residues; the sequence is STHSSQCSRQTGSQPT. The interval 337-418 is disordered; it reads STHSSQCSRQ…NPNPDVINTS (82 aa). Low complexity predominate over residues 356–374; the sequence is PAPTCSNTTTTASPTTANT. Ser457 carries the post-translational modification Phosphoserine. Residues 515 to 644 and 633 to 760 contribute to the a nucleoside 3',5'-cyclic phosphate site; these read ELGL…VVRR and IVLD…LSHR. The PNPLA domain maps to 987–1153; that stretch reads LVLGGGGARG…VNNLPGQLWR (167 aa). The GXGXXG motif lies at 991–996; the sequence is GGGARG. Positions 1018 to 1022 match the GXSXG motif; sequence GVSIG. Residue Ser1020 is the Nucleophile of the active site. The active-site Proton acceptor is Asp1140. The DGA/G motif lies at 1140 to 1142; it reads DGG. Ser1234 carries the post-translational modification Phosphoserine. The disordered stretch occupies residues 1409 to 1514; the sequence is EKSIHSAATS…KGGAYNETKN (106 aa). Composition is skewed to basic and acidic residues over residues 1425-1449 and 1456-1470; these read RSRE…ETER and LDRK…KEPE. Residues 1471-1489 show a composition bias toward acidic residues; the sequence is QEQELETEEPNQENTEVEE.

This sequence belongs to the NTE family. As to quaternary structure, interacts with Pka-C3; interaction inhibits the catalytic function of Pka-C3 and the esterase activity of sws.

The protein localises to the endoplasmic reticulum membrane. The enzyme catalyses a 1-acyl-sn-glycero-3-phosphocholine + H2O = sn-glycerol 3-phosphocholine + a fatty acid + H(+). Its function is as follows. Phospholipase B that deacylates intracellular phosphatidylcholine (PtdCho), generating glycerophosphocholine (GroPtdCho). This deacylation occurs at both sn-2 and sn-1 positions of PtdCho. Its specific chemical modification by certain organophosphorus (OP) compounds leads to distal axonopathy. Plays a role in the signaling mechanism between neurons and glia that regulates glia wrapping during development of the adult brain. Essential for membrane lipid homeostasis and cell survival in both neurons and glia of the adult brain. The sequence is that of Neuropathy target esterase sws from Drosophila ananassae (Fruit fly).